Here is a 223-residue protein sequence, read N- to C-terminus: Phosphoribosylformylglycinamidine synthase subunit PurQ (223 aa).

One can recognise a Glutamine amidotransferase type-1 domain in the interval 3–223 (FAVLVFPGSN…MVKSWREQHV (221 aa)). C85 serves as the catalytic Nucleophile. Active-site residues include H193 and E195.

As to quaternary structure, part of the FGAM synthase complex composed of 1 PurL, 1 PurQ and 2 PurS subunits.

The protein localises to the cytoplasm. The enzyme catalyses N(2)-formyl-N(1)-(5-phospho-beta-D-ribosyl)glycinamide + L-glutamine + ATP + H2O = 2-formamido-N(1)-(5-O-phospho-beta-D-ribosyl)acetamidine + L-glutamate + ADP + phosphate + H(+). It catalyses the reaction L-glutamine + H2O = L-glutamate + NH4(+). Its pathway is purine metabolism; IMP biosynthesis via de novo pathway; 5-amino-1-(5-phospho-D-ribosyl)imidazole from N(2)-formyl-N(1)-(5-phospho-D-ribosyl)glycinamide: step 1/2. In terms of biological role, part of the phosphoribosylformylglycinamidine synthase complex involved in the purines biosynthetic pathway. Catalyzes the ATP-dependent conversion of formylglycinamide ribonucleotide (FGAR) and glutamine to yield formylglycinamidine ribonucleotide (FGAM) and glutamate. The FGAM synthase complex is composed of three subunits. PurQ produces an ammonia molecule by converting glutamine to glutamate. PurL transfers the ammonia molecule to FGAR to form FGAM in an ATP-dependent manner. PurS interacts with PurQ and PurL and is thought to assist in the transfer of the ammonia molecule from PurQ to PurL. The sequence is that of Phosphoribosylformylglycinamidine synthase subunit PurQ from Staphylococcus aureus (strain Mu50 / ATCC 700699).